Consider the following 499-residue polypeptide: E3 ubiquitin-protein ligase TRIM69 (499 aa).

The tract at residues 1–152 (MEVSSRPPSN…SMGQSKDFLQ (152 aa)) is necessary for nuclear localization. An RING-type zinc finger spans residues 41-82 (CPLCNDWFRDPLMLTCGHNFCQACIQNYWKMQAKETFCPECK). Residues 160–265 (FTEELAIYQS…NIQARMEQQN (106 aa)) are a coiled coil. The B30.2/SPRY domain maps to 305 to 499 (PIQYTIWREM…KEPLHIVHPQ (195 aa)). Ser341 carries the post-translational modification Phosphoserine.

It belongs to the TRIM/RBCC family. In terms of assembly, homo-multimer; required for antiviral activity. Interacts with PML. In terms of processing, phosphorylated. Phosphorylation is necessary for nuclear localization.

It localises to the cytoplasm. Its subcellular location is the nucleus. It is found in the nucleus speckle. The protein localises to the cytoskeleton. The protein resides in the microtubule organizing center. It localises to the centrosome. The catalysed reaction is S-ubiquitinyl-[E2 ubiquitin-conjugating enzyme]-L-cysteine + [acceptor protein]-L-lysine = [E2 ubiquitin-conjugating enzyme]-L-cysteine + N(6)-ubiquitinyl-[acceptor protein]-L-lysine.. The protein operates within protein modification; protein ubiquitination. Its function is as follows. E3 ubiquitin ligase that plays an important role in antiviral immunity by restricting different viral infections including dengue virus or vesicular stomatitis indiana virus. Ubiquitinates viral proteins such as dengue virus NS3 thereby limiting infection. In addition, acts as a key mediator of type I interferon induced microtubule stabilization by directly associating to microtubules independently of its E3 ligase activity. Also plays a role in cataract formation together with TP53. Mechanistically, inhibits UVB-induced cell apoptosis and reactive oxygen species (ROS) production by inducing TP53 ubiquitination. Regulates centrosome dynamics and mitotic progression by ubiquitinating STK3/MST2; leading to its redistribution to the perinuclear cytoskeleton and subsequent phosphorylation by PLK1. This is E3 ubiquitin-protein ligase TRIM69 (Trim69) from Rattus norvegicus (Rat).